The primary structure comprises 228 residues: MACKVLVVDLDGTLTLGRNTYELSAEALLALRRARDAGIRVVLATANGLDFALTVARYLGIRDVIAENGCLVHLDGVTYELCSGDMAEVDRLVLSTGVVKPSHQNKCRKYDLAYIPLREDAVERLRDVLGPGYVVESSGYAIHVRPAGVDKGTAVKWLCQRLGVPCFQVASVGDSDVDVGMLSVSWGFAVGNATPAAKKAAKVVVDGPSGIGFKEAVEIILSGGACAP.

D9 serves as the catalytic Nucleophile. Residues D9 and D11 each coordinate Mg(2+). A substrate-binding site is contributed by K151. The Mg(2+) site is built by D174 and D178.

Belongs to the archaeal SPP-like hydrolase family. Mg(2+) is required as a cofactor.

It carries out the reaction 2-phosphoglycolate + H2O = glycolate + phosphate. In terms of biological role, catalyzes the dephosphorylation of 2-phosphoglycolate. This chain is Phosphoglycolate phosphatase, found in Pyrobaculum aerophilum (strain ATCC 51768 / DSM 7523 / JCM 9630 / CIP 104966 / NBRC 100827 / IM2).